A 125-amino-acid chain; its full sequence is Small ribosomal subunit protein uS12c (125 aa).

The disordered stretch occupies residues 1-23 (MPTLEHLTRSPRKKIKRKTKSPA). Positions 9–20 (RSPRKKIKRKTK) are enriched in basic residues.

This sequence belongs to the universal ribosomal protein uS12 family. Part of the 30S ribosomal subunit.

The protein resides in the plastid. Its subcellular location is the chloroplast. Its function is as follows. With S4 and S5 plays an important role in translational accuracy. Located at the interface of the 30S and 50S subunits. The chain is Small ribosomal subunit protein uS12c (rps12) from Euglena gracilis.